The following is an 82-amino-acid chain: Small ribosomal subunit protein bS16 (82 aa).

This sequence belongs to the bacterial ribosomal protein bS16 family.

The protein is Small ribosomal subunit protein bS16 of Natranaerobius thermophilus (strain ATCC BAA-1301 / DSM 18059 / JW/NM-WN-LF).